Consider the following 369-residue polypeptide: Flagellar P-ring protein (369 aa).

The signal sequence occupies residues Met1–Ala22.

This sequence belongs to the FlgI family. In terms of assembly, the basal body constitutes a major portion of the flagellar organelle and consists of four rings (L,P,S, and M) mounted on a central rod.

Its subcellular location is the periplasm. The protein localises to the bacterial flagellum basal body. Assembles around the rod to form the L-ring and probably protects the motor/basal body from shearing forces during rotation. The polypeptide is Flagellar P-ring protein (Pseudomonas entomophila (strain L48)).